A 477-amino-acid polypeptide reads, in one-letter code: Cysteine--tRNA ligase (477 aa).

Cysteine 30 is a Zn(2+) binding site. The 'HIGH' region motif lies at 32–42; the sequence is PTVYDYNHIGH. 3 residues coordinate Zn(2+): cysteine 209, histidine 234, and glutamate 238. A 'KMSKS' region motif is present at residues 267–271; that stretch reads KMSKS. Lysine 270 serves as a coordination point for ATP.

This sequence belongs to the class-I aminoacyl-tRNA synthetase family. The cofactor is Zn(2+).

It is found in the cytoplasm. The catalysed reaction is tRNA(Cys) + L-cysteine + ATP = L-cysteinyl-tRNA(Cys) + AMP + diphosphate. The polypeptide is Cysteine--tRNA ligase (Staphylothermus marinus (strain ATCC 43588 / DSM 3639 / JCM 9404 / F1)).